The following is a 229-amino-acid chain: HTH-type transcriptional regulator HbdR (229 aa).

One can recognise an HTH tetR-type domain in the interval Glu-20–Tyr-80. A DNA-binding region (H-T-H motif) is located at residues Thr-43–Phe-62.

In terms of assembly, homodimer in solution.

Activity is regulated by the effector molecules 3-hydroxybenzoyl-CoA and benzoyl-CoA, which bind to HbdR, alleviating its repression on the three target promoters and inducing the expression of the hbd genes. In terms of biological role, transcriptional regulator that controls the expression of the hbd cluster, which contains three catabolic operons and is responsible for the anaerobic degradation of 3-hydroxybenzoate. HbdR suppresses the activity of the three catabolic promoters (PhbdN, PhbdE and PhbdH) by binding to a conserved palindromic operator box. In addition, it slightly increases activity of its own promoter (PhbdR). The HbdR-mediated repression of hbd genes may play a crucial biological role in maintaining requisite hydroxybenzoate levels in the cell. This Aromatoleum sp. (strain CIB) (Azoarcus sp. (strain CIB)) protein is HTH-type transcriptional regulator HbdR.